The chain runs to 105 residues: U-scoloptoxin(05)-Sa2a (105 aa).

Residues Met-1 to Ala-24 form the signal peptide. The disordered stretch occupies residues His-79–Asn-105. Polar residues predominate over residues Thr-92–Asn-105.

This sequence belongs to the scoloptoxin-05 family. Contains 4 disulfide bonds. In terms of tissue distribution, expressed by the venom gland.

The protein localises to the secreted. This chain is U-scoloptoxin(05)-Sa2a, found in Scolopendra alternans (Florida Keys giant centipede).